The sequence spans 81 residues: Tissue- and phase-specific nuclear protein (81 aa).

As to expression, expressed in oviduct, where expression levels are higher in uterine sections than in tuba sections. No expression detected in small intestine and liver (at protein level).

The protein localises to the nucleus. The sequence is that of Tissue- and phase-specific nuclear protein from Podarcis siculus (Italian wall lizard).